The primary structure comprises 308 residues: Putative transcription elongation factor S-II (308 aa).

The region spanning 5–84 is the TFIIS N-terminal domain; sequence EETQSLCKQV…KDWKNVVDGK (80 aa). Positions 82-126 are disordered; the sequence is DGKSKSQDDGGAPPAKKHRKESVEEAKPEKKKIEAPYKRPEPSSR. The span at 102 to 125 shows a compositional bias: basic and acidic residues; it reads ESVEEAKPEKKKIEAPYKRPEPSS. Positions 148–263 constitute a TFIIS central domain; it reads TRLKSAQLLL…EHQMSVQQGT (116 aa). The TFIIS-type zinc-finger motif lies at 266-306; it reads DMFKCGKCGKKNCTYTQLQTRSSDEPMTTFVFCLECGNRWK. Zn(2+)-binding residues include cysteine 270, cysteine 273, cysteine 298, and cysteine 301.

It belongs to the TFS-II family.

It is found in the nucleus. Necessary for efficient RNA polymerase II transcription elongation past template-encoded arresting sites. The arresting sites in DNA have the property of trapping a certain fraction of elongating RNA polymerases that pass through, resulting in locked ternary complexes. Cleavage of the nascent transcript by S-II allows the resumption of elongation from the new 3'-terminus. The protein is Putative transcription elongation factor S-II of Caenorhabditis elegans.